Consider the following 557-residue polypeptide: Large cysteine-rich periplasmic protein omcB (557 aa).

An N-terminal signal peptide occupies residues 1 to 22 (MSKLIRRVVTVLALTSMASSFA). Residues 23–40 (SGKIEAAAAESLATRFIA) constitute a propeptide that is removed on maturation.

Part of a disulfide cross-linked outer membrane complex (COMC) composed of the major outer membrane porin (MOMP), the small cysteine-rich protein (omcA) and the large cysteine-rich periplasmic protein (omcB).

Its subcellular location is the periplasm. In terms of biological role, in elementary bodies (EBs, the infectious stage, which is able to survive outside the host cell) provides the structural integrity of the outer envelope through disulfide cross-links with the small cysteine-rich protein and the major outer membrane porin. It has been described in publications as the Sarkosyl-insoluble COMC (Chlamydia outer membrane complex), and serves as the functional equivalent of peptidoglycan. This Chlamydophila psittaci (strain ATCC VR-125 / 6BC) (Chlamydia psittaci) protein is Large cysteine-rich periplasmic protein omcB (omcB).